A 99-amino-acid polypeptide reads, in one-letter code: Aspartyl/glutamyl-tRNA(Asn/Gln) amidotransferase subunit C (99 aa).

This sequence belongs to the GatC family. Heterotrimer of A, B and C subunits.

It carries out the reaction L-glutamyl-tRNA(Gln) + L-glutamine + ATP + H2O = L-glutaminyl-tRNA(Gln) + L-glutamate + ADP + phosphate + H(+). The catalysed reaction is L-aspartyl-tRNA(Asn) + L-glutamine + ATP + H2O = L-asparaginyl-tRNA(Asn) + L-glutamate + ADP + phosphate + 2 H(+). Its function is as follows. Allows the formation of correctly charged Asn-tRNA(Asn) or Gln-tRNA(Gln) through the transamidation of misacylated Asp-tRNA(Asn) or Glu-tRNA(Gln) in organisms which lack either or both of asparaginyl-tRNA or glutaminyl-tRNA synthetases. The reaction takes place in the presence of glutamine and ATP through an activated phospho-Asp-tRNA(Asn) or phospho-Glu-tRNA(Gln). This Paraburkholderia phytofirmans (strain DSM 17436 / LMG 22146 / PsJN) (Burkholderia phytofirmans) protein is Aspartyl/glutamyl-tRNA(Asn/Gln) amidotransferase subunit C.